We begin with the raw amino-acid sequence, 115 residues long: NADH-ubiquinone oxidoreductase chain 3 (115 aa).

3 helical membrane-spanning segments follow: residues 3–23 (LMLTLFTNATLASLLILIAFW), 55–75 (FFLVAITFLLFDLEIALLLPL), and 87–107 (VLFMALALITLLALSLAYEWI).

The protein belongs to the complex I subunit 3 family. As to quaternary structure, core subunit of respiratory chain NADH dehydrogenase (Complex I) which is composed of 45 different subunits. Interacts with TMEM186. Interacts with TMEM242.

Its subcellular location is the mitochondrion inner membrane. It carries out the reaction a ubiquinone + NADH + 5 H(+)(in) = a ubiquinol + NAD(+) + 4 H(+)(out). In terms of biological role, core subunit of the mitochondrial membrane respiratory chain NADH dehydrogenase (Complex I) which catalyzes electron transfer from NADH through the respiratory chain, using ubiquinone as an electron acceptor. Essential for the catalytic activity of complex I. This chain is NADH-ubiquinone oxidoreductase chain 3, found in Dugong dugon (Dugong).